The following is a 337-amino-acid chain: Glyceraldehyde-3-phosphate dehydrogenase (337 aa).

NAD(+) contacts are provided by residues arginine 12 to isoleucine 13, aspartate 34, and arginine 79. D-glyceraldehyde 3-phosphate contacts are provided by residues serine 150 to threonine 152, threonine 181, threonine 210 to glycine 211, and arginine 233. The active-site Nucleophile is cysteine 151. Residue asparagine 315 coordinates NAD(+).

It belongs to the glyceraldehyde-3-phosphate dehydrogenase family. As to quaternary structure, homotetramer.

It localises to the cytoplasm. The enzyme catalyses D-glyceraldehyde 3-phosphate + phosphate + NAD(+) = (2R)-3-phospho-glyceroyl phosphate + NADH + H(+). It participates in carbohydrate degradation; glycolysis; pyruvate from D-glyceraldehyde 3-phosphate: step 1/5. In Ajellomyces capsulatus (Darling's disease fungus), this protein is Glyceraldehyde-3-phosphate dehydrogenase (GPD).